We begin with the raw amino-acid sequence, 261 residues long: Kallikrein-1 (261 aa).

Positions 1 to 18 (MRFLILFLALSLGGIDAA) are cleaved as a signal peptide. Residues 19 to 24 (PPVQSR) constitute a propeptide, activation peptide. Residues 25-258 (IVGGFNCEKN…FNTWIRETMA (234 aa)) form the Peptidase S1 domain. 5 disulfides stabilise this stretch: Cys-31/Cys-173, Cys-50/Cys-66, Cys-152/Cys-219, Cys-184/Cys-198, and Cys-209/Cys-234. His-65 functions as the Charge relay system in the catalytic mechanism. An N-linked (GlcNAc...) asparagine glycan is attached at Asn-102. The Charge relay system role is filled by Asp-120. Ser-213 (charge relay system) is an active-site residue.

This sequence belongs to the peptidase S1 family. Kallikrein subfamily.

It carries out the reaction Preferential cleavage of Arg-|-Xaa bonds in small molecule substrates. Highly selective action to release kallidin (lysyl-bradykinin) from kininogen involves hydrolysis of Met-|-Xaa or Leu-|-Xaa.. In terms of biological role, glandular kallikreins cleave Met-Lys and Arg-Ser bonds in kininogen to release Lys-bradykinin. This is Kallikrein-1 (Klk1) from Mus musculus (Mouse).